The following is a 1213-amino-acid chain: Formin (1213 aa).

5 disordered regions span residues 1 to 24, 66 to 111, 144 to 169, 183 to 216, and 357 to 489; these read MEGG…SEPD, QANN…EPEP, VHTT…TSKC, GNNQ…PISQ, and DVSK…PKAN. Composition is skewed to basic and acidic residues over residues 187–210 and 431–464; these read SKEE…DTEL and EAIK…DKSP. Coiled-coil stretches lie at residues 428–450 and 503–572; these read SELE…VFER and EYQA…IGVS. The tract at residues 624 to 774 is disordered; sequence ISTQGENKDS…PRKPAIEPSR (151 aa). Over residues 636-647 the composition is skewed to polar residues; the sequence is VPSSESVLSCQP. Pro residues-rich tracts occupy residues 650–672, 680–689, and 718–751; these read MLPP…PPPF, LVPPPPPLPT, and PAPP…PPGP. In terms of domain architecture, FH1 spans 652–751; the sequence is PPSPPPPPPP…LPPPPPPPGP (100 aa). The segment covering 755–764 has biased composition (polar residues); the sequence is FNSTLSSSQG. The FH2 domain occupies 766 to 1182; that stretch reads RKPAIEPSRP…KVAQQSVSKL (417 aa). Residues 1050–1125 are a coiled coil; sequence FQASQVKFED…ENAQKCFEET (76 aa). The disordered stretch occupies residues 1193–1213; it reads INPTASLKERLRQKEANVNAN.

This sequence belongs to the formin homology family. Cappuccino subfamily. Present in the adult brain, kidney, brain, heart and intestine and throughout the embryo.

It localises to the nucleus. Functionally, is important for morphogenesis of limb and kidney and may be involved in determining dorsoventral neural tube polarity and motor neuron induction. It may also have a function in differentiated cells or be involved in maintaining specific differentiated states. This chain is Formin (LD), found in Gallus gallus (Chicken).